The chain runs to 267 residues: Glutamate 5-kinase (267 aa).

An ATP-binding site is contributed by lysine 18. Residues serine 58, aspartate 145, and asparagine 157 each contribute to the substrate site. ATP-binding positions include 177-178 (SD) and 219-225 (TGGMATK).

The protein belongs to the glutamate 5-kinase family.

The protein localises to the cytoplasm. The catalysed reaction is L-glutamate + ATP = L-glutamyl 5-phosphate + ADP. Its pathway is amino-acid biosynthesis; L-proline biosynthesis; L-glutamate 5-semialdehyde from L-glutamate: step 1/2. Functionally, catalyzes the transfer of a phosphate group to glutamate to form L-glutamate 5-phosphate. The polypeptide is Glutamate 5-kinase (Clostridium tetani (strain Massachusetts / E88)).